A 211-amino-acid chain; its full sequence is Wound-induced protein WIN2 (211 aa).

Residues 1–25 (MVKLSCGPILLALVLCISLTSVANA) form the signal peptide. A Chitin-binding type-1 domain is found at 26–68 (QQCGRQRGGALCGNNLCCSQFGWCGSTPEYCSPSQGCQSQCTG). 4 disulfides stabilise this stretch: Cys-28–Cys-43, Cys-37–Cys-49, Cys-42–Cys-56, and Cys-62–Cys-66. Residues 77 to 198 (GSAQNVRATY…VNYQFVNCGD (122 aa)) form the Barwin domain.

The chain is Wound-induced protein WIN2 (WIN2) from Solanum tuberosum (Potato).